Here is a 1064-residue protein sequence, read N- to C-terminus: MPKRNDIKKIMIIGSGPIIIGQAAEFDYAGTQACLALKEEGYEVVLVNSNPATIMTDREIADTVYIEPITLEFVSKILRKERPDALLPTLGGQTGLNMAMELSKTGILEELNVELLGTKLSAIDQAEDRELFKELCESINEPLCASDIATTVEEAINIADKIGYPIIVRPAFTMGGTGGGICDTEEELREIVANGLKLSPVTQCLIEESIAGYKEIEYEVMRDSADNAIVVCNMENFDPVGVHTGDSIVFAPSQTLSDNEYQMLRDASLNIIHALKIEGGCNVQLALDPNSYEYRVIEVNPRVSRSSALASKATGYPIAKMSAKIAIGMTLDEIINPVTNKTYAMFEPALDYVVAKIARFPFDKFENGDRHLGTQMKATGEVMAIGRNIEESLLKAVRSLEIGVFHNEMTEAIEADDEKLYEKMVKTQDDRLFYVSEAIRCGIPIEEIADLTKIDIFFLDKLLHIVEIENQLKVNIFEPELLKTAKKNGFSDREIAKLWNVTPEEVRRRRQENKIIPVYKMVDTCAAEFESSTPYFYSTYEWENESKRSDKEKIIVLGSGPIRIGQGVEFDYATVHCVKAIQALGKEAIVINSNPETVSTDFSISDKLYFEPLTFEDVMNVIDLEEPLGVIVQFGGQTAINLAEPLSKAGVKILGTQVEDLDRAEDRDLFEKALQDLDIPQPPGATATNEEEAVANANKIGYPVLIRPSFVLGGRAMEIINNEKDLRDYMNRAVKASPEHPVLVDSYLQGQECEVDAICDGKEVLLPGIMEHIERAGVHSGDSMAVYPPQNLSQAIIDTIVDYTKRLAIGLNCIGMMNIQFVIYEEQVYVIEVNPRASRTVPFLSKVTNIPMAQLATQMILGENLKDLGYEAGLAPTPDMVHVKAPVFSFTKLAKVDSLLGPEMKSTGEAMGSDVTLEKALYKSFEAAKLHMADYGSVLFTVADEDKEETLAFAKDFAEIGYSLVATAGTAAFLKENGLYVREVEKLAGGEDEEGTLVEDIRQGRVQAVVNTMGNTRASLTTATDGFRIRQEAISRGIPLFTSLDTVAAILKVMQSRSFTTKNI.

The tract at residues 1–401 (MPKRNDIKKI…SLLKAVRSLE (401 aa)) is carboxyphosphate synthetic domain. 12 residues coordinate ATP: Arg-129, Arg-169, Gly-175, Gly-176, Glu-208, Ile-210, Glu-215, Gly-241, Val-242, His-243, Gln-284, and Glu-298. In terms of domain architecture, ATP-grasp 1 spans 133 to 327 (KELCESINEP…IAKMSAKIAI (195 aa)). The Mg(2+) site is built by Gln-284, Glu-298, and Asn-300. Mn(2+) contacts are provided by Gln-284, Glu-298, and Asn-300. Residues 402–546 (IGVFHNEMTE…YSTYEWENES (145 aa)) form an oligomerization domain region. The tract at residues 547-929 (KRSDKEKIIV…ALYKSFEAAK (383 aa)) is carbamoyl phosphate synthetic domain. The 191-residue stretch at 671-861 (EKALQDLDIP…MAQLATQMIL (191 aa)) folds into the ATP-grasp 2 domain. ATP is bound by residues Arg-707, Ser-746, Leu-748, Glu-752, Gly-777, Val-778, His-779, Ser-780, Gln-820, and Glu-832. The Mg(2+) site is built by Gln-820, Glu-832, and Asn-834. Residues Gln-820, Glu-832, and Asn-834 each coordinate Mn(2+). In terms of domain architecture, MGS-like spans 930-1064 (LHMADYGSVL…QSRSFTTKNI (135 aa)). The tract at residues 930 to 1064 (LHMADYGSVL…QSRSFTTKNI (135 aa)) is allosteric domain.

Belongs to the CarB family. In terms of assembly, composed of two chains; the small (or glutamine) chain promotes the hydrolysis of glutamine to ammonia, which is used by the large (or ammonia) chain to synthesize carbamoyl phosphate. Tetramer of heterodimers (alpha,beta)4. Mg(2+) serves as cofactor. The cofactor is Mn(2+).

The catalysed reaction is hydrogencarbonate + L-glutamine + 2 ATP + H2O = carbamoyl phosphate + L-glutamate + 2 ADP + phosphate + 2 H(+). The enzyme catalyses hydrogencarbonate + NH4(+) + 2 ATP = carbamoyl phosphate + 2 ADP + phosphate + 2 H(+). It participates in amino-acid biosynthesis; L-arginine biosynthesis; carbamoyl phosphate from bicarbonate: step 1/1. Its pathway is pyrimidine metabolism; UMP biosynthesis via de novo pathway; (S)-dihydroorotate from bicarbonate: step 1/3. Functionally, large subunit of the glutamine-dependent carbamoyl phosphate synthetase (CPSase). CPSase catalyzes the formation of carbamoyl phosphate from the ammonia moiety of glutamine, carbonate, and phosphate donated by ATP, constituting the first step of 2 biosynthetic pathways, one leading to arginine and/or urea and the other to pyrimidine nucleotides. The large subunit (synthetase) binds the substrates ammonia (free or transferred from glutamine from the small subunit), hydrogencarbonate and ATP and carries out an ATP-coupled ligase reaction, activating hydrogencarbonate by forming carboxy phosphate which reacts with ammonia to form carbamoyl phosphate. This Lactococcus lactis subsp. cremoris (strain SK11) protein is Carbamoyl phosphate synthase large chain.